Consider the following 376-residue polypeptide: N-acetyldiaminopimelate deacetylase (376 aa).

Residue Asp70 is part of the active site. The active-site Proton acceptor is Glu129.

The protein belongs to the peptidase M20A family. N-acetyldiaminopimelate deacetylase subfamily.

It catalyses the reaction N-acetyl-(2S,6S)-2,6-diaminopimelate + H2O = (2S,6S)-2,6-diaminopimelate + acetate. It functions in the pathway amino-acid biosynthesis; L-lysine biosynthesis via DAP pathway; LL-2,6-diaminopimelate from (S)-tetrahydrodipicolinate (acetylase route): step 3/3. In terms of biological role, catalyzes the conversion of N-acetyl-diaminopimelate to diaminopimelate and acetate. In Geobacillus sp. (strain WCH70), this protein is N-acetyldiaminopimelate deacetylase.